A 241-amino-acid polypeptide reads, in one-letter code: Small ribosomal subunit protein uS2 (241 aa).

It belongs to the universal ribosomal protein uS2 family.

This Yersinia enterocolitica serotype O:8 / biotype 1B (strain NCTC 13174 / 8081) protein is Small ribosomal subunit protein uS2.